We begin with the raw amino-acid sequence, 780 residues long: Cyclin-F (780 aa).

Residues 20–28 carry the Nuclear localization signal 1 motif; sequence KRRIKRRPR. The 48-residue stretch at 29 to 76 folds into the F-box domain; sequence NLTILSLPEDVLFHILKWLSVGDILAVRAVHSHLKYLVDNHASVWASA. Residues 288 to 405 form the Cyclin N-terminal domain; sequence QASQAVNKQQ…EIISALEGKI (118 aa). 3 short sequence motifs (d box) span residues 310-313, 343-346, and 349-352; these read RYIL, RRRL, and RYKL. Disordered regions lie at residues 544 to 594, 651 to 733, and 745 to 780; these read QESP…AELS, QESS…STKP, and CRPP…FLKL. A Nuclear localization signal 2 motif is present at residues 568–574; the sequence is RRSKRKR. The PEST stretch occupies residues 582 to 761; that stretch reads RGSFVTTPTA…ESGAHQQPVK (180 aa). The span at 585 to 594 shows a compositional bias: polar residues; it reads FVTTPTAELS. Composition is skewed to low complexity over residues 695–708 and 719–731; these read SGYS…PISS and STSV…HSST. The D box 4 motif lies at 762-765; that stretch reads RQNL.

The protein belongs to the cyclin family. Cyclin AB subfamily. As to quaternary structure, component of the SCF(CCNF) complex consisting of CUL1, RBX1, SKP1 and CCNF. Interacts with SKP1. Interacts with CUL1. Interacts with CCNB1; interaction is required for nuclear localization of CCNB1. Interacts with CCP110; this interaction leads to CCP110 ubiquitination and degradation via the proteasome pathway. Interacts (via the Cyclin N-terminal domain) with MYBL2/BMYB. Interacts with FZR1/CDH1 (via N-terminus). Interacts with RRM2 (via Cy motif and when phosphorylated at 'Thr-33'); the interaction occurs exclusively in G2 and early M. Interacts with CDC6 (via Cy motif); the interaction takes place during G2 and M phase. In terms of processing, degraded when the spindle assembly checkpoint is activated during the G2-M transition. Degradation is not dependent on the proteasome or ubiquitin and depends on the C-terminal PEST sequence. Phosphorylated just before cells enter into mitosis. Post-translationally, ubiquitinated by the anaphase-promoting complex (APC/C); leading to its degradation by the proteasome.

Its subcellular location is the nucleus. The protein resides in the cytoplasm. The protein localises to the perinuclear region. It localises to the cytoskeleton. It is found in the microtubule organizing center. Its subcellular location is the centrosome. The protein resides in the centriole. Substrate recognition component of a SCF (SKP1-CUL1-F-box protein) E3 ubiquitin-protein ligase complex which mediates the ubiquitination and subsequent proteasomal degradation of target proteins. The SCF(CCNF) E3 ubiquitin-protein ligase complex is an integral component of the ubiquitin proteasome system (UPS) and links proteasome degradation to the cell cycle. Mediates the substrate recognition and the proteasomal degradation of various target proteins involved in the regulation of cell cycle progression and in the maintenance of genome stability. Mediates the ubiquitination and subsequent proteasomal degradation of CP110 during G2 phase, thereby acting as an inhibitor of centrosome reduplication. In G2, mediates the ubiquitination and proteasomal degradation of CDC6, thereby suppressing DNA re-replication and preventing genome instability. Involved in the ubiquitination and degradation of the substrate adapter CDH1 of the anaphase-promoting complex (APC/C), thereby acting as an antagonist of APC/C in regulating G1 progression and S phase entry. May play a role in the G2 cell cycle checkpoint control after DNA damage, possibly by promoting the ubiquitination of MYBL2/BMYB. The polypeptide is Cyclin-F (Ccnf) (Rattus norvegicus (Rat)).